The primary structure comprises 149 residues: Nucleoside diphosphate kinase (149 aa).

Lysine 9, phenylalanine 57, arginine 85, threonine 91, arginine 102, and asparagine 112 together coordinate ATP. Histidine 115 serves as the catalytic Pros-phosphohistidine intermediate.

This sequence belongs to the NDK family. Homotetramer. Mg(2+) serves as cofactor.

The protein resides in the cytoplasm. It catalyses the reaction dZDP + ATP = dZTP + ADP. It carries out the reaction a 2'-deoxyribonucleoside 5'-diphosphate + ATP = a 2'-deoxyribonucleoside 5'-triphosphate + ADP. The enzyme catalyses a ribonucleoside 5'-diphosphate + ATP = a ribonucleoside 5'-triphosphate + ADP. Its pathway is purine metabolism. In terms of biological role, major role in the synthesis of nucleoside triphosphates other than ATP. The ATP gamma phosphate is transferred to the NDP beta phosphate via a ping-pong mechanism, using a phosphorylated active-site intermediate. Functionally, (Microbial infection) Catalyzes the phosphorylation of dZDP to dZTP, when the bacterium is infected by a phage that produces the substrate for the synthesis of dZTP (2- amino-2'-deoxyadenosine 5'-triphosphate), which is then used by the phage as a DNA polymerase substrate. The protein is Nucleoside diphosphate kinase of Synechococcus elongatus (strain ATCC 33912 / PCC 7942 / FACHB-805) (Anacystis nidulans R2).